The following is a 288-amino-acid chain: 4-hydroxy-tetrahydrodipicolinate synthase (288 aa).

Residue T42 participates in pyruvate binding. Y129 functions as the Proton donor/acceptor in the catalytic mechanism. K157 functions as the Schiff-base intermediate with substrate in the catalytic mechanism. I198 serves as a coordination point for pyruvate.

It belongs to the DapA family. In terms of assembly, homotetramer; dimer of dimers.

The protein resides in the cytoplasm. The catalysed reaction is L-aspartate 4-semialdehyde + pyruvate = (2S,4S)-4-hydroxy-2,3,4,5-tetrahydrodipicolinate + H2O + H(+). Its pathway is amino-acid biosynthesis; L-lysine biosynthesis via DAP pathway; (S)-tetrahydrodipicolinate from L-aspartate: step 3/4. Functionally, catalyzes the condensation of (S)-aspartate-beta-semialdehyde [(S)-ASA] and pyruvate to 4-hydroxy-tetrahydrodipicolinate (HTPA). This Chlamydia abortus (strain DSM 27085 / S26/3) (Chlamydophila abortus) protein is 4-hydroxy-tetrahydrodipicolinate synthase.